Here is a 293-residue protein sequence, read N- to C-terminus: Probable porphobilinogen deaminase (293 aa).

At cysteine 233 the chain carries S-(dipyrrolylmethanemethyl)cysteine.

Belongs to the HMBS family. It depends on dipyrromethane as a cofactor.

The enzyme catalyses 4 porphobilinogen + H2O = hydroxymethylbilane + 4 NH4(+). It functions in the pathway porphyrin-containing compound metabolism; protoporphyrin-IX biosynthesis; coproporphyrinogen-III from 5-aminolevulinate: step 2/4. Its function is as follows. Tetrapolymerization of the monopyrrole PBG into the hydroxymethylbilane pre-uroporphyrinogen in several discrete steps. This Saccharolobus islandicus (strain Y.G.57.14 / Yellowstone #1) (Sulfolobus islandicus) protein is Probable porphobilinogen deaminase.